A 178-amino-acid polypeptide reads, in one-letter code: Germinal center-associated signaling and motility protein (178 aa).

Serine 99 is modified (phosphoserine). The residue at position 148 (tyrosine 148) is a Phosphotyrosine.

As to quaternary structure, interacts with ACTB and MYH2; the interaction with MYH2 is increased by IL6-induced phosphorylation. Interacts (via C-terminus) with ARHGEF11 (via DH domain). Interacts with ARHGEF12. Interacts with SYK; the interaction increases after B-cell receptor stimulation, resulting in enhanced SYK autophosphorylation and activity. In terms of processing, phosphorylation on tyrosine residues can be induced by IL6. Phosphorylation is mediated by LYN. Targeted by the ubiquitin E3 ligase subunit FBXO10 to mediate its ubiquitination and degradation. Expressed in diffuse large B-cell lymphoma (DLBCL) and several germinal center (GC)-like lymphoma cell lines (at protein level). Highly expressed in normal GC lymphocytes and GC-derived malignancies. Expressed in thymus and spleen.

Its subcellular location is the cytoplasm. It is found in the cell membrane. Its function is as follows. Involved in the negative regulation of lymphocyte motility. It mediates the migration-inhibitory effects of IL6. Serves as a positive regulator of the RhoA signaling pathway. Enhancement of RhoA activation results in inhibition of lymphocyte and lymphoma cell motility by activation of its downstream effector ROCK. Is a regulator of B-cell receptor signaling, that acts through SYK kinase activation. This chain is Germinal center-associated signaling and motility protein (GCSAM), found in Homo sapiens (Human).